The following is a 774-amino-acid chain: Lon protease 1 (774 aa).

Residues 9–202 enclose the Lon N-terminal domain; that stretch reads IPLLPLRGLL…KVIDFINNEK (194 aa). Position 354–361 (354–361) interacts with ATP; sequence GPPGVGKT. The Lon proteolytic domain occupies 590–771; it reads EDQVGVVTGL…DEVLEHALVG (182 aa). Residues S677 and K720 contribute to the active site.

The protein belongs to the peptidase S16 family. As to quaternary structure, homohexamer. Organized in a ring with a central cavity. Exists as a mixture of small oligomeric species in solution.

It is found in the cytoplasm. The catalysed reaction is Hydrolysis of proteins in presence of ATP.. Functionally, ATP-dependent serine protease that mediates the selective degradation of mutant and abnormal proteins as well as certain short-lived regulatory proteins. Required for cellular homeostasis and for survival from DNA damage and developmental changes induced by stress. Degrades polypeptides processively to yield small peptide fragments that are 5 to 10 amino acids long. Binds to DNA in a double-stranded, site-specific manner. Has been implicated in preventing sigma(G) activity under non-sporulation conditions. In Bacillus subtilis (strain 168), this protein is Lon protease 1.